The primary structure comprises 160 residues: Transcriptional regulator MraZ (160 aa).

2 consecutive SpoVT-AbrB domains span residues 5 to 50 (NFET…DGGY) and 93 to 136 (AVEC…SQAE).

The protein belongs to the MraZ family. Forms oligomers.

The protein localises to the cytoplasm. It is found in the nucleoid. The protein is Transcriptional regulator MraZ of Geotalea daltonii (strain DSM 22248 / JCM 15807 / FRC-32) (Geobacter daltonii).